The chain runs to 230 residues: Potassium/proton antiporter CemA (230 aa).

A run of 4 helical transmembrane segments spans residues 7 to 27 (LPSLLYLVFIVLLPWGVSSSF), 107 to 127 (ILHFSTNIICLAILSGSFFLG), 145 to 165 (LNDSIKAFFILLVTDFFVGFH), and 181 to 201 (FGWAPNELIFTIFVCSFPVIL).

The protein belongs to the CemA family.

The protein resides in the plastid. It is found in the chloroplast inner membrane. It carries out the reaction K(+)(in) + H(+)(out) = K(+)(out) + H(+)(in). In terms of biological role, contributes to K(+)/H(+) antiport activity by supporting proton efflux to control proton extrusion and homeostasis in chloroplasts in a light-dependent manner to modulate photosynthesis. Prevents excessive induction of non-photochemical quenching (NPQ) under continuous-light conditions. Indirectly promotes efficient inorganic carbon uptake into chloroplasts. The chain is Potassium/proton antiporter CemA from Triticum aestivum (Wheat).